The primary structure comprises 802 residues: Bifunctional purine biosynthetic protein ADE5,7 (802 aa).

Residues 1–450 (MLNILVLGNG…QNSESSKVAI (450 aa)) are GARS. The ATP-grasp domain occupies 114 to 330 (KRFMSKHNIP…LAQVFLAAAE (217 aa)). Residue 141–203 (QAHTDKAFVI…EQFLEGDEIS (63 aa)) coordinates ATP. Glu-298 and Asn-300 together coordinate Mg(2+). Residues 451–802 (TYADSGVSVD…CVIENGTKLY (352 aa)) form an AIRS region. Ser-455 and Ser-458 each carry phosphoserine.

It in the N-terminal section; belongs to the GARS family. In the C-terminal section; belongs to the AIR synthase family. It depends on Mg(2+) as a cofactor. Requires Mn(2+) as cofactor.

The protein localises to the cytoplasm. It carries out the reaction 5-phospho-beta-D-ribosylamine + glycine + ATP = N(1)-(5-phospho-beta-D-ribosyl)glycinamide + ADP + phosphate + H(+). The enzyme catalyses 2-formamido-N(1)-(5-O-phospho-beta-D-ribosyl)acetamidine + ATP = 5-amino-1-(5-phospho-beta-D-ribosyl)imidazole + ADP + phosphate + H(+). The protein operates within purine metabolism; IMP biosynthesis via de novo pathway; 5-amino-1-(5-phospho-D-ribosyl)imidazole from N(2)-formyl-N(1)-(5-phospho-D-ribosyl)glycinamide: step 2/2. It participates in purine metabolism; IMP biosynthesis via de novo pathway; N(1)-(5-phospho-D-ribosyl)glycinamide from 5-phospho-alpha-D-ribose 1-diphosphate: step 2/2. Catalyzes the second and fifth step in the 'de novo' purine biosynthesis pathway; contains phosphoribosylamine--glycine ligase (GARS) and phosphoribosylformylglycinamidine cyclo-ligase (AIRS) activities. This chain is Bifunctional purine biosynthetic protein ADE5,7, found in Saccharomyces cerevisiae (strain ATCC 204508 / S288c) (Baker's yeast).